Reading from the N-terminus, the 292-residue chain is Sulfofructosephosphate aldolase (292 aa).

K193 (schiff-base intermediate with substrate) is an active-site residue.

This sequence belongs to the aldolase LacD family. Homotetramer.

The catalysed reaction is 6-deoxy-6-sulfo-D-fructose 1-phosphate = (2S)-3-sulfolactaldehyde + dihydroxyacetone phosphate. In terms of biological role, cleaves 6-deoxy-6-sulfo-D-fructose 1-phosphate (SFP) to form dihydroxyacetone phosphate (DHAP) and 3-sulfolactaldehyde (SLA). Can also catalyze the reverse reaction. This is Sulfofructosephosphate aldolase (yihT) from Salmonella typhimurium (strain LT2 / SGSC1412 / ATCC 700720).